Consider the following 130-residue polypeptide: Small ribosomal subunit protein uS9 (130 aa).

It belongs to the universal ribosomal protein uS9 family.

In Ectopseudomonas mendocina (strain ymp) (Pseudomonas mendocina), this protein is Small ribosomal subunit protein uS9.